Consider the following 579-residue polypeptide: MGLLYALRVRIMNFMIFFLLIILMPGLPPRTTFPFKDYIVTPPKDLKGALESNFHLEGAERLLEGRVYGPECLIARNNEIYTGIHGGEVIKLTSNHVTHVTKIGQPCEDIYEESRCGRPLGLAFDTQGNNLIIADAYYGLWQVDLGTNKKTLLVSPAQELAGKSINRPAKIFNGVTVSKEGDVYWTDSSSDFTIEDLVFASFANPSGRLFKYNRSKNVSEVLLDELAFANGLALSPNEDFIVVAETGAMRLTKYHLKGAKAGQSEVFVDGLPGLPDNLTPDAEGIWVPLVQSADSEHPNGFTLFTRFPSVRLFLARMLALFELPFRYLNSVYPNKFSQRFVHFVGHMESITVLAPKRTTVVRVDWNGNIVGSLHGFDKSAATVSHVLEFQDFLFLGSPTNQYLARVKSPKAKQPTLKVRNVRVEGEGLEASIGVPPSKATPKPKAAPSTTTPKPTTTTTTTTPKPTTKTTTTTTTPKPTTTTTTKKPTTTTTTTTTTPKPTTTKPPTAKPSTTTTTTTTPKPTTTTTPTTPTPEPSKPKVKRTVPEKPAPVEEDIPSDTQPPKKEKLKVINKQGVNVEL.

Over 1-6 (MGLLYA) the chain is Cytoplasmic. A helical membrane pass occupies residues 7-29 (LRVRIMNFMIFFLLIILMPGLPP). Over 30-579 (RTTFPFKDYI…INKQGVNVEL (550 aa)) the chain is Extracellular. N-linked (GlcNAc...) asparagine glycans are attached at residues N213 and N217. Residues 427 to 579 (GLEASIGVPP…INKQGVNVEL (153 aa)) form a disordered region. The segment covering 435–529 (PPSKATPKPK…PKPTTTTTPT (95 aa)) has biased composition (low complexity).

The protein belongs to the strictosidine synthase family. As to quaternary structure, interacts with sturkopf. O-glycosylated. Glycosylated in the ovary of 4 day old females. Post-translationally, phosphorylated. As to expression, detected in ovaries (at protein level). In larvae, detected in the fat body, salivary glands, imaginal disks and gut (at protein level). In adults, expressed in the cardia, and in regions of the ventriculus including the area posterior to the cardia. In females also expressed in follicle cells.

Its subcellular location is the cell membrane. Transmembrane mucin that may be involved in cellular adhesion and the innate immune response. Membrane-tethered mucins are involved in many cell surface functions and form a physical barrier around cells to regulate cell-cell and/or cell-substrate interactions, and protect against pathogens or harmful extracellular conditions. This mucin likely acts in hemocyte adhesion as it is released from hemocytes during coagulation and is also able to bind lipophorin particles which form part of the hemocyte coagulogen. Able to induce expression of the antibacterial proteins in the presence of GalNAc-specific lectins and so probably also functions in the innate immune response. The protein is Adipocyte plasma membrane-associated protein Hemomucin of Drosophila melanogaster (Fruit fly).